Reading from the N-terminus, the 122-residue chain is MAVPGYYELYRRSTIGNSLVDALDTLISDGRIEASLAMRVLETFDKVVAETLKDNTQSKLTVKGNLDTYGFCDDVWTFIVKNCQVTVEDSHRDASQNGSGDSQSVISVDKLRIVACNSKKSE.

Phosphoserine is present on residues Ser-95 and Ser-102.

The protein belongs to the TFIIA subunit 2 family. As to quaternary structure, TFIIA is a heterodimer composed of the large TOA1 and a small TOA2 subunits. Interacts with TBP. Interacts with TAF11. Interacts with KAP122.

It is found in the cytoplasm. It localises to the nucleus. Functionally, TFIIA is a component of the transcription machinery of RNA polymerase II and plays an important role in transcriptional activation. TFIIA in a complex with TBP mediates transcriptional activity. The protein is Transcription initiation factor IIA subunit 2 (TOA2) of Saccharomyces cerevisiae (strain ATCC 204508 / S288c) (Baker's yeast).